We begin with the raw amino-acid sequence, 169 residues long: X polypeptide (169 aa).

This sequence belongs to the IagB/IpgF/P19 family.

This is X polypeptide (yubQ) from Escherichia coli (strain K12).